The chain runs to 282 residues: Putative hydrolase BceJ2315_61450 (282 aa).

Mg(2+)-binding residues include Glu124, Glu126, and Asp155.

The protein belongs to the FAH family. The cofactor is Mg(2+).

In Burkholderia cenocepacia (strain ATCC BAA-245 / DSM 16553 / LMG 16656 / NCTC 13227 / J2315 / CF5610) (Burkholderia cepacia (strain J2315)), this protein is Putative hydrolase BceJ2315_61450.